A 258-amino-acid chain; its full sequence is 14-3-3-like protein F (258 aa).

It belongs to the 14-3-3 family.

This Nicotiana tabacum (Common tobacco) protein is 14-3-3-like protein F.